The primary structure comprises 153 residues: Phosphatase NudJ (153 aa).

Residues 3–131 (KPHVTVACVV…LVAESIRCYQ (129 aa)) enclose the Nudix hydrolase domain. The short motif at 36–57 (GHLEADETLVEAAARELWEETG) is the Nudix box element.

It belongs to the Nudix hydrolase family. NudJ subfamily. Monomer. The cofactor is Mg(2+).

In Escherichia coli O139:H28 (strain E24377A / ETEC), this protein is Phosphatase NudJ (nudJ).